The primary structure comprises 234 residues: Urease accessory protein UreF (234 aa).

Belongs to the UreF family. UreD, UreF and UreG form a complex that acts as a GTP-hydrolysis-dependent molecular chaperone, activating the urease apoprotein by helping to assemble the nickel containing metallocenter of UreC. The UreE protein probably delivers the nickel.

Its subcellular location is the cytoplasm. In terms of biological role, required for maturation of urease via the functional incorporation of the urease nickel metallocenter. The polypeptide is Urease accessory protein UreF (Azoarcus sp. (strain BH72)).